The following is a 485-amino-acid chain: Glutamyl-tRNA(Gln) amidotransferase subunit A (485 aa).

Residues lysine 76 and serine 151 each act as charge relay system in the active site. Catalysis depends on serine 175, which acts as the Acyl-ester intermediate.

It belongs to the amidase family. GatA subfamily. Heterotrimer of A, B and C subunits.

It carries out the reaction L-glutamyl-tRNA(Gln) + L-glutamine + ATP + H2O = L-glutaminyl-tRNA(Gln) + L-glutamate + ADP + phosphate + H(+). Functionally, allows the formation of correctly charged Gln-tRNA(Gln) through the transamidation of misacylated Glu-tRNA(Gln) in organisms which lack glutaminyl-tRNA synthetase. The reaction takes place in the presence of glutamine and ATP through an activated gamma-phospho-Glu-tRNA(Gln). In Pelagibacter ubique (strain HTCC1062), this protein is Glutamyl-tRNA(Gln) amidotransferase subunit A.